Here is a 208-residue protein sequence, read N- to C-terminus: Ubiquinone biosynthesis protein COQ4 homolog, mitochondrial (208 aa).

Zn(2+) is bound by residues H105, D106, H109, and E122.

This sequence belongs to the COQ4 family. Component of a multi-subunit COQ enzyme complex. It depends on Zn(2+) as a cofactor.

The protein localises to the mitochondrion inner membrane. It carries out the reaction a 4-hydroxy-3-methoxy-5-(all-trans-polyprenyl)benzoate + H(+) = a 2-methoxy-6-(all-trans-polyprenyl)phenol + CO2. The protein operates within cofactor biosynthesis; ubiquinone biosynthesis. Lyase that catalyzes the C1-decarboxylation of 4-hydroxy-3-methoxy-5-(all-trans-polyprenyl)benzoic acid into 2-methoxy-6-(all-trans-polyprenyl)phenol during ubiquinone biosynthesis. The chain is Ubiquinone biosynthesis protein COQ4 homolog, mitochondrial from Nematostella vectensis (Starlet sea anemone).